Consider the following 363-residue polypeptide: Pyruvate dehydrogenase E1 component subunit beta-1, mitochondrial (363 aa).

The transit peptide at 1-29 (MLGILRQRAIDGASTLRRTRFALVSARSY) directs the protein to the mitochondrion. Glu-92 is a binding site for thiamine diphosphate. K(+)-binding residues include Ile-145, Ala-193, Ile-194, and Asp-196. Residues Lys-247 and Lys-254 each participate in a glycyl lysine isopeptide (Lys-Gly) (interchain with G-Cter in ubiquitin) cross-link.

As to quaternary structure, tetramer of 2 alpha and 2 beta subunits. The cofactor is thiamine diphosphate. As to expression, expressed in roots, immature rosettes, and mature rosettes.

The protein localises to the mitochondrion matrix. It carries out the reaction N(6)-[(R)-lipoyl]-L-lysyl-[protein] + pyruvate + H(+) = N(6)-[(R)-S(8)-acetyldihydrolipoyl]-L-lysyl-[protein] + CO2. In terms of biological role, the pyruvate dehydrogenase complex catalyzes the overall conversion of pyruvate to acetyl-CoA and CO(2). It contains multiple copies of three enzymatic components: pyruvate dehydrogenase (E1), dihydrolipoamide acetyltransferase (E2) and lipoamide dehydrogenase (E3). The sequence is that of Pyruvate dehydrogenase E1 component subunit beta-1, mitochondrial (PDH2) from Arabidopsis thaliana (Mouse-ear cress).